The following is a 153-amino-acid chain: Ribosome maturation factor RimP (153 aa).

It belongs to the RimP family.

Its subcellular location is the cytoplasm. Its function is as follows. Required for maturation of 30S ribosomal subunits. The polypeptide is Ribosome maturation factor RimP (Clostridium botulinum (strain ATCC 19397 / Type A)).